We begin with the raw amino-acid sequence, 45 residues long: Phospholipase A2 3 (45 aa).

The Ca(2+) site is built by Y20, G24, and G25. A disulfide bridge links C21 with C36. H39 is a catalytic residue. D40 lines the Ca(2+) pocket.

Requires Ca(2+) as cofactor. In terms of tissue distribution, expressed by the venom gland.

The protein localises to the secreted. It catalyses the reaction a 1,2-diacyl-sn-glycero-3-phosphocholine + H2O = a 1-acyl-sn-glycero-3-phosphocholine + a fatty acid + H(+). In terms of biological role, PLA2 catalyzes the calcium-dependent hydrolysis of the 2-acyl groups in 3-sn-phosphoglycerides. The sequence is that of Phospholipase A2 3 from Bothrops diporus (Chaco lancehead).